Reading from the N-terminus, the 364-residue chain is 4-hydroxy-3-methylbut-2-en-1-yl diphosphate synthase (flavodoxin) (364 aa).

The [4Fe-4S] cluster site is built by C268, C271, C303, and E310.

Belongs to the IspG family. Requires [4Fe-4S] cluster as cofactor.

It carries out the reaction (2E)-4-hydroxy-3-methylbut-2-enyl diphosphate + oxidized [flavodoxin] + H2O + 2 H(+) = 2-C-methyl-D-erythritol 2,4-cyclic diphosphate + reduced [flavodoxin]. The protein operates within isoprenoid biosynthesis; isopentenyl diphosphate biosynthesis via DXP pathway; isopentenyl diphosphate from 1-deoxy-D-xylulose 5-phosphate: step 5/6. Functionally, converts 2C-methyl-D-erythritol 2,4-cyclodiphosphate (ME-2,4cPP) into 1-hydroxy-2-methyl-2-(E)-butenyl 4-diphosphate. The polypeptide is 4-hydroxy-3-methylbut-2-en-1-yl diphosphate synthase (flavodoxin) (Anoxybacillus flavithermus (strain DSM 21510 / WK1)).